A 413-amino-acid chain; its full sequence is Alpha-1-antitrypsin-like protein CM55-ST (413 aa).

Positions 1–24 (MPSSISWGLLLLAALSCLGPGSLA) are cleaved as a signal peptide. The residue at position 25 (Gln25) is a Pyrrolidone carboxylic acid. Residues Asn65, Asn102, Asn165, and Asn266 are each glycosylated (N-linked (GlcNAc...) asparagine). Residues 368-387 (GGTVLGNIRSTLRYEVIFDR) form an RCL region.

It belongs to the serpin family. Expressed in liver.

This Tamias sibiricus (Siberian chipmunk) protein is Alpha-1-antitrypsin-like protein CM55-ST.